Consider the following 146-residue polypeptide: Ferric uptake regulation protein 2 (146 aa).

Residues Cys96 and Cys99 each contribute to the Zn(2+) site.

It belongs to the Fur family.

Its subcellular location is the cytoplasm. In terms of biological role, acts as a global negative controlling element, employing Fe(2+) as a cofactor to bind the operator of the repressed genes. This Mycolicibacterium fortuitum (Mycobacterium fortuitum) protein is Ferric uptake regulation protein 2 (fur2).